A 4625-amino-acid polypeptide reads, in one-letter code: Dynein-1-alpha heavy chain, flagellar inner arm I1 complex (4625 aa).

The interval 1–1919 (MDRRLEWVKE…LIRQCTGLFK (1919 aa)) is stem. Residues 70-84 (EQAPEAEDGEGEEHD) show a composition bias toward acidic residues. Residues 70-163 (EQAPEAEDGE…DEPPAPPAPK (94 aa)) are disordered. A compositionally biased stretch (low complexity) spans 111–140 (EDAPAAAAEANGANPEDEAAAPADGAADGA). Residues 144-155 (GGEEGDGAEGDE) show a composition bias toward acidic residues. 960 to 967 (AGTNSGKS) lines the ATP pocket. 2 coiled-coil regions span residues 1227–1259 (EELK…RYRT) and 1339–1409 (TVEL…AVRQ). 4 AAA regions span residues 1920–2141 (YGYE…VLVM), 2201–2437 (DVVE…RRPK), 2550–2800 (EPPA…IYEG), and 2906–3155 (NFYN…LRRY). Residues 1958–1965 (GPAGTGKT), 2242–2249 (GQTGGGKT), 2588–2595 (GESGTAKS), and 2945–2952 (GVGGSGKQ) each bind ATP. Coiled-coil stretches lie at residues 3192-3297 (LEKL…IRSY) and 3400-3494 (KRKK…LIGD). A stalk region spans residues 3192-3494 (LEKLIQAAVE…ESRRDRLIGD (303 aa)). AAA regions lie at residues 3542–3773 (LTSD…EIAE) and 3998–4216 (ITRF…LIST). 3680–3687 (GPEISGKT) is an ATP binding site. Residues 3701-3788 (EQLLNVTLRH…KVTAAEIEET (88 aa)) adopt a coiled-coil conformation.

It belongs to the dynein heavy chain family. In terms of assembly, the I1 inner arm complex (also known as the f dynein complex) is a two-headed isoform composed of two heavy chains (1-alpha and 1-beta), three intermediate chains and three light chains. I1 occupies a specific position proximal to the first radial spoke and repeats every 96 nm along the length of the axoneme.

The protein resides in the cell projection. It is found in the cilium. Its subcellular location is the flagellum. It localises to the cytoplasm. The protein localises to the cytoskeleton. The protein resides in the flagellum axoneme. Its function is as follows. Force generating protein of eukaryotic cilia and flagella. Produces force towards the minus ends of microtubules. Dynein has ATPase activity; the force-producing power stroke is thought to occur on release of ADP. Required for assembly of the I1 inner arm complex and its targeting to the appropriate axoneme location. Also required for phototaxis. The chain is Dynein-1-alpha heavy chain, flagellar inner arm I1 complex (DHC1) from Chlamydomonas reinhardtii (Chlamydomonas smithii).